We begin with the raw amino-acid sequence, 717 residues long: Protein Teyrha-meyrha (717 aa).

Polar residues predominate over residues 140 to 152 (FRTDSASPTCTSH). 6 disordered regions span residues 140–214 (FRTD…SNPA), 229–270 (HLAA…APPV), 440–498 (KIPP…QPGK), 511–539 (SQKD…GEAP), 563–594 (DSCG…MDTA), and 624–717 (QRRQ…DTKA). The segment covering 195–214 (ATSSSASSSSSSSCSTSNPA) has biased composition (low complexity). Basic residues predominate over residues 235–263 (PHHHPHTHAHSHPHPLAHPHAHSHHHVGH). Over residues 442 to 451 (PPEDDAKSQE) the composition is skewed to basic and acidic residues. Over residues 452–466 (EIETVDVESCNDEVP) the composition is skewed to acidic residues. Over residues 471 to 482 (ELATPSSGSSGT) the composition is skewed to polar residues. The span at 513–522 (KDPHPDEHDV) shows a compositional bias: basic and acidic residues. Low complexity-rich tracts occupy residues 523-533 (STNVTTASSSS) and 570-580 (NDTNSSSSTHN). Residues 630 to 640 (QNVGSSRSLEN) are compositionally biased toward polar residues. Residues 667–686 (NNNNNNNNNNNNSNSNNNNN) are compositionally biased toward low complexity. A compositionally biased stretch (polar residues) spans 687 to 704 (PSTKYAESMENSLSQLSS).

In embryos, expressed specifically in M12 (at protein level).

It is found in the nucleus. In terms of biological role, required for the correct synaptic targeting of motoneurons RP5 and V to muscle 12 (M12). May be involved in the negative regulation of Tl in M12. Involved in the correct patterning of veins in the proximal (costal) region of the wing blade. This is Protein Teyrha-meyrha from Drosophila melanogaster (Fruit fly).